The sequence spans 209 residues: Uracil phosphoribosyltransferase (209 aa).

5-phospho-alpha-D-ribose 1-diphosphate is bound by residues arginine 79, arginine 104, and 131-139; that span reads DPMLATGGS. Residues isoleucine 194 and 199-201 contribute to the uracil site; that span reads GDA. Aspartate 200 provides a ligand contact to 5-phospho-alpha-D-ribose 1-diphosphate.

The protein belongs to the UPRTase family. Mg(2+) is required as a cofactor.

The catalysed reaction is UMP + diphosphate = 5-phospho-alpha-D-ribose 1-diphosphate + uracil. Its pathway is pyrimidine metabolism; UMP biosynthesis via salvage pathway; UMP from uracil: step 1/1. Allosterically activated by GTP. Its function is as follows. Catalyzes the conversion of uracil and 5-phospho-alpha-D-ribose 1-diphosphate (PRPP) to UMP and diphosphate. The sequence is that of Uracil phosphoribosyltransferase from Clostridium beijerinckii (strain ATCC 51743 / NCIMB 8052) (Clostridium acetobutylicum).